Here is a 212-residue protein sequence, read N- to C-terminus: DNA-directed RNA polymerase III subunit RPC8 (212 aa).

Residue S162 is modified to Phosphoserine. A compositionally biased stretch (basic and acidic residues) spans 166 to 184; it reads RELEERAQLENEIEGKNEE. The interval 166–194 is disordered; sequence RELEERAQLENEIEGKNEETPQNEKPPAY.

This sequence belongs to the eukaryotic RPB7/RPC8 RNA polymerase subunit family. In terms of assembly, component of the RNA polymerase III (Pol III) complex consisting of 17 subunits. RPC25/RPC8 and RPC17/RPC9 form a Pol III subcomplex.

It localises to the nucleus. Functionally, DNA-dependent RNA polymerase catalyzes the transcription of DNA into RNA using the four ribonucleoside triphosphates as substrates. Specific peripheric component of RNA polymerase III which synthesizes small RNAs, such as 5S rRNA and tRNA. The RPC25/RPC8-RPC17/RPC9 subcomplex may bind Pol III transcripts emerging from the adjacent exit pore during elongation. The polypeptide is DNA-directed RNA polymerase III subunit RPC8 (RPC25) (Saccharomyces cerevisiae (strain ATCC 204508 / S288c) (Baker's yeast)).